The following is a 380-amino-acid chain: MAAAAAAPGGGGGEPRGTAGVVPVVPGEVEVVKGQPFDVGPRYTQLQYIGEGAYGMVSSAYDHVRKTRVAIKKISPFEHQTYCQRTLREIQILLRFRHENVIGIRDILRAPTLEAMRDVYIVQDLMETDLYKLLKSQQLSNDHICYFLYQILRGLKYIHSANVLHRDLKPSNLLINTTCDLKICDFGLARIADPEHDHTGFLTEYVATRWYRAPEIMLNSKGYTKSIDIWSVGCILAEMLSNRPIFPGKHYLDQLNHILGILGSPSQEDLNCIINMKARNYLQSLPSKTKVAWAKLFPKSDSKALDLLDRMLTFNPNKRITVEEALAHPYLEQYYDPTDEPVAEEPFTFDMELDDLPKERLKELIFQETARFQPGAPEAP.

At Ala-2 the chain carries N-acetylalanine. The Protein kinase domain occupies 43-331 (YTQLQYIGEG…VEEALAHPYL (289 aa)). ATP-binding positions include 49–57 (IGEGAYGMV) and Lys-72. Asp-167 functions as the Proton acceptor in the catalytic mechanism. Residue Thr-199 is modified to Phosphothreonine. Thr-203 bears the Phosphothreonine; by MAP2K1 and MAP2K2 mark. The TXY motif lies at 203–205 (TEY). Residue Tyr-205 is modified to Phosphotyrosine; by MAP2K1 and MAP2K2. The residue at position 208 (Thr-208) is a Phosphothreonine; by autocatalysis.

It belongs to the protein kinase superfamily. CMGC Ser/Thr protein kinase family. MAP kinase subfamily. As to quaternary structure, binds both upstream activators and downstream substrates in multimolecular complexes. Found in a complex with at least BRAF, HRAS, MAP2K1/MEK1, MAPK3 and RGS14. Interacts with ADAM15, ARRB2, CANX, DAPK1 (via death domain), HSF4, IER3, MAP2K1/MEK1, MORG1, NISCH, PEA15, SGK1 and MKNK2. MKNK2 isoform 1 binding prevents from dephosphorylation and inactivation. Interacts with TPR. Interacts with HSF1 (via D domain and preferentially with hyperphosphorylated form); this interaction occurs upon heat shock. Interacts with CDKN2AIP. Interacts with CAVIN4. Interacts with GIT1; this interaction is necessary for MAPK3 localization to focal adhesions. Interacts with ZNF263. Interacts with EBF4. Mg(2+) is required as a cofactor. Phosphorylated upon FLT3 and KIT signaling. Ligand-activated ALK induces tyrosine phosphorylation. Dephosphorylated by PTPRJ at Tyr-205. Dually phosphorylated on Thr-203 and Tyr-205, which activates the enzyme. In terms of processing, ubiquitinated by TRIM15 via 'Lys-63'-linked ubiquitination; leading to activation. Deubiquitinated by CYLD. Highest levels within the nervous system, expressed in different tissues, mostly in intestine, placenta and lung.

Its subcellular location is the cytoplasm. It localises to the nucleus. It is found in the membrane. The protein localises to the caveola. The protein resides in the cell junction. Its subcellular location is the focal adhesion. It catalyses the reaction L-seryl-[protein] + ATP = O-phospho-L-seryl-[protein] + ADP + H(+). The catalysed reaction is L-threonyl-[protein] + ATP = O-phospho-L-threonyl-[protein] + ADP + H(+). Its activity is regulated as follows. Phosphorylated by MAP2K1/MEK1 and MAP2K2/MEK2 on Thr-203 and Tyr-205 in response to external stimuli like insulin or NGF. Both phosphorylations are required for activity. This phosphorylation causes dramatic conformational changes, which enable full activation and interaction of MAPK1/ERK2 with its substrates. Dephosphorylated and inactivated by DUSP3, DUSP6 and DUSP9. Functionally, serine/threonine kinase which acts as an essential component of the MAP kinase signal transduction pathway. MAPK1/ERK2 and MAPK3/ERK1 are the 2 MAPKs which play an important role in the MAPK/ERK cascade. They participate also in a signaling cascade initiated by activated KIT and KITLG/SCF. Depending on the cellular context, the MAPK/ERK cascade mediates diverse biological functions such as cell growth, adhesion, survival and differentiation through the regulation of transcription, translation, cytoskeletal rearrangements. The MAPK/ERK cascade also plays a role in initiation and regulation of meiosis, mitosis, and postmitotic functions in differentiated cells by phosphorylating a number of transcription factors. About 160 substrates have already been discovered for ERKs. Many of these substrates are localized in the nucleus, and seem to participate in the regulation of transcription upon stimulation. However, other substrates are found in the cytosol as well as in other cellular organelles, and those are responsible for processes such as translation, mitosis and apoptosis. Moreover, the MAPK/ERK cascade is also involved in the regulation of the endosomal dynamics, including lysosome processing and endosome cycling through the perinuclear recycling compartment (PNRC); as well as in the fragmentation of the Golgi apparatus during mitosis. The substrates include transcription factors (such as ATF2, BCL6, ELK1, ERF, FOS, HSF4 or SPZ1), cytoskeletal elements (such as CANX, CTTN, GJA1, MAP2, MAPT, PXN, SORBS3 or STMN1), regulators of apoptosis (such as BAD, BTG2, CASP9, DAPK1, IER3, MCL1 or PPARG), regulators of translation (such as EIF4EBP1) and a variety of other signaling-related molecules (like ARHGEF2, DEPTOR, FRS2 or GRB10). Protein kinases (such as RAF1, RPS6KA1/RSK1, RPS6KA3/RSK2, RPS6KA2/RSK3, RPS6KA6/RSK4, SYK, MKNK1/MNK1, MKNK2/MNK2, RPS6KA5/MSK1, RPS6KA4/MSK2, MAPKAPK3 or MAPKAPK5) and phosphatases (such as DUSP1, DUSP4, DUSP6 or DUSP16) are other substrates which enable the propagation the MAPK/ERK signal to additional cytosolic and nuclear targets, thereby extending the specificity of the cascade. The sequence is that of Mitogen-activated protein kinase 3 (Mapk3) from Rattus norvegicus (Rat).